The chain runs to 688 residues: MTNKQQTLFEPVLIRNALMDSVKKCHPAAQWRNPVMFVVYLGSGLTTILWIAMLAGQFKGNALFTGNIALWLWFTVLFANFAEALAEGRSKAQAASLKGVRKTSWATKLHSANRNGSREKAPSDSLRKGDIVIIEAGETIPCDGEVIEGGASVDESAITGESAPVIRESGGDFSSVTGGTHVLSDWLVVECSVNPGETFLDRMISMVEGAKRRKTPNEIALTILLTALTIIFLLVCVTLLPFSIFSVEINHSGQPITVTVLIALLVCLIPTTIGGLLSAIGVAGMSRMLSANVIATSGRAVEAAGDVDVLLLDKTGTITLGNRQASQFLPVPGITEQRLADAAQLSSLADETPEGRSIVILAKQRFNLRERDLRSLNATFVPFSAMTRMSGVNVENRMIRKGAVDAIRRHIEANHGKFPEAVEILVQTVARKGGTPLVVAENQQVLGVVALKDIVKGGIKERFSEMRRMGIKTVMITGDNRLTAAAIAAEAGVDDFLAEATPEAKLALIRQYQSEGRLVAMTGDGTNDAPALAQADVAVAMNSGTQAAKEAGNMVDLDSNPTKLIEVVHIGKQMLMTRGSLTTFSIANDIAKYFAIIPAAFAVTYPQLNILNIMHLHSPTSAVLSTVIFNALIIVFLIPLALKGVSYRPMNASALLRRNLWIYGLGGLIAPFIGIKLIDLLLTLLILK.

Transmembrane regions (helical) follow at residues 35-55, 62-82, 219-239, and 260-280; these read VMFVVYLGSGLTTILWIAMLA, ALFTGNIALWLWFTVLFANFA, IALTILLTALTIIFLLVCVTL, and VLIALLVCLIPTTIGGLLSAI. Asp-313 (4-aspartylphosphate intermediate) is an active-site residue. ATP-binding positions include Asp-350, Glu-354, 383–390, and Lys-401; that span reads FSAMTRMS. The Mg(2+) site is built by Asp-524 and Asp-528. 3 helical membrane passes run 594–614, 622–642, and 667–687; these read FAIIPAAFAVTYPQLNILNIM, AVLSTVIFNALIIVFLIPLAL, and GLIAPFIGIKLIDLLLTLLIL.

It belongs to the cation transport ATPase (P-type) (TC 3.A.3) family. Type IA subfamily. As to quaternary structure, the system is composed of three essential subunits: KdpA, KdpB and KdpC.

Its subcellular location is the cell inner membrane. It catalyses the reaction K(+)(out) + ATP + H2O = K(+)(in) + ADP + phosphate + H(+). Its function is as follows. Part of the high-affinity ATP-driven potassium transport (or Kdp) system, which catalyzes the hydrolysis of ATP coupled with the electrogenic transport of potassium into the cytoplasm. This subunit is responsible for energy coupling to the transport system and for the release of the potassium ions to the cytoplasm. This Photorhabdus laumondii subsp. laumondii (strain DSM 15139 / CIP 105565 / TT01) (Photorhabdus luminescens subsp. laumondii) protein is Potassium-transporting ATPase ATP-binding subunit.